Reading from the N-terminus, the 452-residue chain is Protein mab-21-like 4 (452 aa).

The chain is Protein mab-21-like 4 (Mab21l4) from Mus musculus (Mouse).